A 602-amino-acid chain; its full sequence is MGICVSKPSPEPDLHNHHTSIPVNDTSLPPQDNSIPPKDIAIPAQDNNKPPGKKSPFLPFYSPSPAHFLFSKKSPAVGSPAAGSSNSTPKRLFPFPPPSPAKHIKAAWARRHGSVKPNEAAIPENNEVDGGAGLDKSFGFSKKFGSKFEVGEEVGRGHFGYTCRAKFKKGEFKGQDVAVKVIPKAKMTTAIAIEDVRREVKILRALTGHNNLVQFYDAFEDHTNVYVVMELCEGGELLDRILSRGGKYTEDDAKAVMIQILNVVAFCHLQGVVHRDLKPENFLFKSKDEDSQLKAIDFGLSDYVKPDERLNDIVGSAYYVAPEVLHRSYSTEADVWSIGVISYILLCGSRPFWARTESGIFRAVLKANLSFDEPPWPSVSSEAKDFVKRLLNKDPRKRMTAAQALCHSWIKNSNDIKFPLDILVFKLMKVYMRSSPLRKAALRALSKTLTVDELFYLKEQFVLLEPTKNGTISLENIKQALMRNSTDAMKDSRVLDLLVSLNALQYRRMDFEEFCAAALSVHQLEALDRWEQHARCAYDLFEKDGNRAIMIEELASELGLGPSIPVHAVLHDWIRHTDGKLSFLGYVKLLHGVSTRAIAKAQ.

The segment at Met1–Pro59 is disordered. Residues Thr19–Ser34 show a composition bias toward polar residues. 3 repeat units span residues Ser20 to Thr26, Ser27 to Asn33, and Ser34 to Ile40. The interval Ser20–Ile40 is 3 X 7 AA tandem repeats of S-[LI]-P-X-X-D-X. Positions Phe148–Ile410 constitute a Protein kinase domain. ATP contacts are provided by residues Val154–Thr162 and Lys180. Residue Asp276 is the Proton acceptor of the active site. EF-hand domains are found at residues Val451–Thr486, Asp487–Leu527, Asp528–Ser563, and Ile564–Gln602.

The protein belongs to the protein kinase superfamily. CAMK Ser/Thr protein kinase family. CaMK subfamily.

It catalyses the reaction L-seryl-[protein] + ATP = O-phospho-L-seryl-[protein] + ADP + H(+). The enzyme catalyses L-threonyl-[protein] + ATP = O-phospho-L-threonyl-[protein] + ADP + H(+). The sequence is that of CDPK-related protein kinase (CRK) from Daucus carota (Wild carrot).